The chain runs to 143 residues: Large ribosomal subunit protein uL11 (143 aa).

It belongs to the universal ribosomal protein uL11 family. In terms of assembly, part of the ribosomal stalk of the 50S ribosomal subunit. Interacts with L10 and the large rRNA to form the base of the stalk. L10 forms an elongated spine to which L12 dimers bind in a sequential fashion forming a multimeric L10(L12)X complex. In terms of processing, one or more lysine residues are methylated.

Forms part of the ribosomal stalk which helps the ribosome interact with GTP-bound translation factors. In Borreliella burgdorferi (strain ATCC 35210 / DSM 4680 / CIP 102532 / B31) (Borrelia burgdorferi), this protein is Large ribosomal subunit protein uL11.